The chain runs to 114 residues: Large ribosomal subunit protein eL30 (114 aa).

The protein belongs to the eukaryotic ribosomal protein eL30 family.

The polypeptide is Large ribosomal subunit protein eL30 (RPL30) (Branchiostoma belcheri (Amphioxus)).